The following is a 374-amino-acid chain: uncharacterized protein (374 aa).

Positions 39–66 (RDVRKHLESRDAKQELIDSLEEAVRDSR) form a coiled coil.

This is an uncharacterized protein from Mycobacterium tuberculosis (strain CDC 1551 / Oshkosh).